Consider the following 330-residue polypeptide: Aspartate--ammonia ligase (330 aa).

It belongs to the class-II aminoacyl-tRNA synthetase family. AsnA subfamily.

The protein resides in the cytoplasm. The enzyme catalyses L-aspartate + NH4(+) + ATP = L-asparagine + AMP + diphosphate + H(+). It functions in the pathway amino-acid biosynthesis; L-asparagine biosynthesis; L-asparagine from L-aspartate (ammonia route): step 1/1. This Klebsiella pneumoniae (strain 342) protein is Aspartate--ammonia ligase.